The chain runs to 20 residues: Large ribosomal subunit protein uL5 (20 aa).

This sequence belongs to the universal ribosomal protein uL5 family. As to quaternary structure, part of the 50S ribosomal subunit; part of the 5S rRNA/L5/L18/L25 subcomplex. Contacts the 5S rRNA and the P site tRNA. Forms a bridge to the 30S subunit in the 70S ribosome.

Its function is as follows. This is one of the proteins that bind and probably mediate the attachment of the 5S RNA into the large ribosomal subunit, where it forms part of the central protuberance. In the 70S ribosome it contacts protein S13 of the 30S subunit (bridge B1b), connecting the two subunits; this bridge is implicated in subunit movement. Contacts the P site tRNA; the 5S rRNA and some of its associated proteins might help stabilize positioning of ribosome-bound tRNAs. The polypeptide is Large ribosomal subunit protein uL5 (rplE) (Bacillus cereus).